Reading from the N-terminus, the 250-residue chain is Flavin-dependent thymidylate synthase (250 aa).

The region spanning 7 to 233 is the ThyX domain; the sequence is LSVELIACSS…PTVFGDFEIE (227 aa). DUMP contacts are provided by residues 92 to 95, 103 to 107, and Arg-172; these read ELVR and QLSQR. FAD-binding positions include 95–97 and Gln-103; that span reads RHR. Positions 95–105 match the ThyX motif motif; that stretch reads RHRHFSFSQLS. Residues 188–190 and His-194 each bind FAD; that span reads NFR. Arg-199 serves as a coordination point for dUMP. The active-site Involved in ionization of N3 of dUMP, leading to its activation is the Arg-199.

The protein belongs to the thymidylate synthase ThyX family. As to quaternary structure, homotetramer. FAD is required as a cofactor.

It carries out the reaction dUMP + (6R)-5,10-methylene-5,6,7,8-tetrahydrofolate + NADPH + H(+) = dTMP + (6S)-5,6,7,8-tetrahydrofolate + NADP(+). It participates in pyrimidine metabolism; dTTP biosynthesis. In terms of biological role, catalyzes the reductive methylation of 2'-deoxyuridine-5'-monophosphate (dUMP) to 2'-deoxythymidine-5'-monophosphate (dTMP) while utilizing 5,10-methylenetetrahydrofolate (mTHF) as the methyl donor, and NADPH and FADH(2) as the reductant. This Corynebacterium glutamicum (strain ATCC 13032 / DSM 20300 / JCM 1318 / BCRC 11384 / CCUG 27702 / LMG 3730 / NBRC 12168 / NCIMB 10025 / NRRL B-2784 / 534) protein is Flavin-dependent thymidylate synthase.